We begin with the raw amino-acid sequence, 220 residues long: RPA-interacting protein B (220 aa).

Positions 1–45 (MEAERRHRALYKGTTPPWKETYRKRCVERLKSNRSKLLDKFRQVG) are interaction with importin beta. An interaction with RPA1 region spans residues 49–165 (HGGVGGSFLV…QCGVYINTQS (117 aa)). An RIP-type zinc finger spans residues 138 to 213 (CPVCNRNYLT…ASLFMSCQEC (76 aa)).

In terms of assembly, interacts directly with the RPA1 subunit of RPA complex. Interacts with importin beta, but not with importin alpha. Forms a complex with the RPA complex and importin beta, which is dissociated by Ran-GTP.

It localises to the nucleus. Functionally, mediates the import of RPA complex into the nucleus, via its interaction with importin beta. This is RPA-interacting protein B (rpain-b) from Xenopus laevis (African clawed frog).